Here is a 222-residue protein sequence, read N- to C-terminus: Global nitrogen regulator (222 aa).

Residue 6 to 128 coordinates a nucleoside 3',5'-cyclic phosphate; sequence NSLLTMFREL…NVMLQGLSSR (123 aa). In terms of domain architecture, HTH crp-type spans 142–215; it reads RDMGSRLVSF…KKRITVFNPV (74 aa). Positions 175–194 form a DNA-binding region, H-T-H motif; it reads HQAIAEAIGSTRVTVTRLLG.

Required for full expression of proteins subject to ammonium repression. Transcriptional activator of genes subject to nitrogen control. This Synechococcus elongatus (strain ATCC 33912 / PCC 7942 / FACHB-805) (Anacystis nidulans R2) protein is Global nitrogen regulator (ntcA).